The sequence spans 288 residues: Damage-control phosphatase AF_1104 (288 aa).

Positions 7–10 (CPSC) match the Subfamily I CxxC motif motif. 3 residues coordinate Mn(2+): Asp160, Asn161, and Asp194. The short motif at 247-250 (ANYE) is the Subfamily I GNFE-like motif element. The short motif at 267-268 (KC) is the Subfamily I KC motif element.

Belongs to the damage-control phosphatase family. Nucleotides phosphatase I subfamily. The cofactor is [2Fe-2S] cluster. Mn(2+) is required as a cofactor. Requires Ni(2+) as cofactor.

Functionally, metal-dependent phosphatase with probable damage-control functions. Could hydrolyze oxidatively damaged purine nucleotides or their biosynthetic intermediates. The protein is Damage-control phosphatase AF_1104 of Archaeoglobus fulgidus (strain ATCC 49558 / DSM 4304 / JCM 9628 / NBRC 100126 / VC-16).